A 403-amino-acid chain; its full sequence is Formin-like protein 21b (403 aa).

The FH2 domain maps to 1–380 (MELLFTATLL…KAAKEAEMEK (380 aa)). The disordered stretch occupies residues 373–403 (AKEAEMEKTKKRVSLTNKKASGVGEEESCLI).

Belongs to the formin-like family. Class-II subfamily.

In Arabidopsis thaliana (Mouse-ear cress), this protein is Formin-like protein 21b (FH21B).